The primary structure comprises 609 residues: Alpha-glucosides permease MPH2 (609 aa).

Residues 1–106 (MKNLSFLINR…AAAWSLLVST (106 aa)) are Cytoplasmic-facing. Residues 107–127 (TLIMEGYDTAILGAFYALPIF) traverse the membrane as a helical segment. The Extracellular portion of the chain corresponds to 128 to 142 (QRKFGSQNDKTGEWE). The chain crosses the membrane as a helical span at residues 143–163 (ISASWQIGLTLCYMAGEIVGL). At 164 to 178 (QLTGPSVDLVGNRYT) the chain is on the cytoplasmic side. The helical transmembrane segment at 179–199 (LIIALFFLAAFTFILYFCNSL) threads the bilayer. G200 is a topological domain (extracellular). Residues 201–221 (MIAVGQALCGMPWGCFQCLTV) form a helical membrane-spanning segment. At 222–234 (SYASEICPLALRY) the chain is on the cytoplasmic side. Residues 235–255 (YLTTYSNLCWLFGQLFAAGIM) traverse the membrane as a helical segment. Residues 256 to 270 (KNSQKKYADSELGYK) are Extracellular-facing. Residues 271–291 (LPFALQWILPVPLALGIFFAP) traverse the membrane as a helical segment. Residues 292–363 (ESPWWLVKKG…EDKINRRRTR (72 aa)) are Cytoplasmic-facing. A helical membrane pass occupies residues 364–384 (ITCLCWAGQATCGSILIGYST). Topologically, residues 385 to 397 (YFYEKAGVSTEMS) are extracellular. Residues 398 to 418 (FTFSIIQYCLGICATFLSWWA) form a helical membrane-spanning segment. At 419 to 426 (SKYFGRYD) the chain is on the cytoplasmic side. The chain crosses the membrane as a helical span at residues 427–447 (LYAFGLAFQTIVFFIIGGLGC). Over 448–459 (SSTHGSKMGSGS) the chain is Extracellular. Residues 460–480 (LLMAVAFFYNLGIAPVVFCLV) traverse the membrane as a helical segment. The Cytoplasmic segment spans residues 481 to 492 (SEMPSSRLRTKT). Residues 493-513 (IILARNTYNVVSIICSVLILY) form a helical membrane-spanning segment. Topologically, residues 514-525 (QLNSKKWNWGAK) are extracellular. Residues 526–546 (SGFFWGVLCFCTLIWAVVDLP) form a helical membrane-spanning segment. Topologically, residues 547-609 (ETAGKTFVEI…QRNSNVSHHL (63 aa)) are cytoplasmic.

This sequence belongs to the major facilitator superfamily. Sugar transporter (TC 2.A.1.1) family.

Its subcellular location is the cell membrane. In terms of biological role, high-affinity uptake of maltose and maltotriose. Also transports alpha-methylglucoside, glucose and turanose but not melezitose or trehalose. This chain is Alpha-glucosides permease MPH2 (MPH2), found in Saccharomyces cerevisiae (strain ATCC 204508 / S288c) (Baker's yeast).